The chain runs to 109 residues: Nucleoid-associated protein CKO_02678 (109 aa).

The interval 89–109 is disordered; sequence KEKMASVSSGMQLPPGFKMPF.

It belongs to the YbaB/EbfC family. In terms of assembly, homodimer.

It is found in the cytoplasm. It localises to the nucleoid. Binds to DNA and alters its conformation. May be involved in regulation of gene expression, nucleoid organization and DNA protection. The protein is Nucleoid-associated protein CKO_02678 of Citrobacter koseri (strain ATCC BAA-895 / CDC 4225-83 / SGSC4696).